We begin with the raw amino-acid sequence, 519 residues long: NADH dehydrogenase (519 aa).

Residues 1-183 form a membrane-binding region; that stretch reads MVLEPQIKSQ…YLNGESFTSG (183 aa). Residues 184–519 form a catalytic region; sequence RMTVEEILAQ…TTPAESAAAK (336 aa). 210 to 241 provides a ligand contact to FAD; that stretch reads DVLVVGGGPAGASSAIYAARKGIRTGIVADRF. A disulfide bond links Cys-337 and Cys-340. NAD(+) is bound at residue 349–379; the sequence is DVAVIGGGNSGVEAAIDLAGIVNHVTVLEFM. An FAD-binding site is contributed by 469–479; the sequence is TNVPGVFAAGD.

Belongs to the class-II pyridine nucleotide-disulfide oxidoreductase family. Homodimer. Requires FAD as cofactor.

It localises to the cell membrane. The enzyme catalyses a ubiquinone + NADH + 5 H(+)(in) = a ubiquinol + NAD(+) + 4 H(+)(out). Its function is as follows. Transfer of electrons from NADH to the respiratory chain. The immediate electron acceptor for the enzyme is believed to be ubiquinone. The sequence is that of NADH dehydrogenase (ahpF) from Ferdinandcohnia aciditolerans (strain JCM 32973 / CCTCC AB 2017280 / YN-1) (Bacillus aciditolerans).